The chain runs to 1241 residues: Phosphorylase b kinase regulatory subunit alpha, skeletal muscle isoform (1241 aa).

Phosphoserine is present on residues S629, S730, S736, S739, S759, S812, S973, S982, and S986. Residues 811 to 841 are calmodulin-binding; the sequence is LSELYVKVGEIRHWGLIRYISGILRKKVEAL. S1008 carries the post-translational modification Phosphoserine; by autocatalysis. The residue at position 1019 (S1019) is a Phosphoserine; by PKA. A phosphoserine mark is found at S1021 and S1024. A calmodulin-binding region spans residues 1064 to 1104; it reads SKDSRQGQWQRRRRLDGALNRVPIGFYQKVWKILQKCHGLS. S1131 is modified (phosphoserine). A lipid anchor (S-farnesyl cysteine) is attached at C1238.

It belongs to the phosphorylase b kinase regulatory chain family. In terms of assembly, hexadecamer of 4 heterotetramers, each composed of alpha, beta, gamma, and delta subunits. Alpha (PHKA1 or PHKA2) and beta (PHKB) are regulatory subunits, gamma (PHKG1 or PHKG2) is the catalytic subunit, and delta is calmodulin. Post-translationally, although the final Cys may be farnesylated, the terminal tripeptide is probably not removed, and the C-terminus is not methylated. In terms of tissue distribution, both isoforms are expressed in muscle.

It localises to the cell membrane. It participates in glycan biosynthesis; glycogen metabolism. Its activity is regulated as follows. By phosphorylation of various serine residues and by calcium. Phosphorylase b kinase catalyzes the phosphorylation of serine in certain substrates, including troponin I. The alpha chain may bind calmodulin. The sequence is that of Phosphorylase b kinase regulatory subunit alpha, skeletal muscle isoform (Phka1) from Mus musculus (Mouse).